The following is a 263-amino-acid chain: Ribonuclease 3 (263 aa).

The tract at residues 1–23 is disordered; sequence MPHSKNQRKHRHHSHSERRRQPK. In terms of domain architecture, RNase III spans 35-164; sequence FDELLRTLNL…FVGALYLDQG (130 aa). E77 is a binding site for Mg(2+). Residue D81 is part of the active site. Mg(2+)-binding residues include D150 and E153. E153 is a catalytic residue. The DRBM domain maps to 190 to 259; the sequence is DFKSQLQEFI…AQQALITLSQ (70 aa).

The protein belongs to the ribonuclease III family. As to quaternary structure, homodimer. The cofactor is Mg(2+).

It localises to the cytoplasm. The enzyme catalyses Endonucleolytic cleavage to 5'-phosphomonoester.. In terms of biological role, digests double-stranded RNA. Involved in the processing of primary rRNA transcript to yield the immediate precursors to the large and small rRNAs (23S and 16S). Processes some mRNAs, and tRNAs when they are encoded in the rRNA operon. Processes pre-crRNA and tracrRNA of type II CRISPR loci if present in the organism. This Halalkalibacterium halodurans (strain ATCC BAA-125 / DSM 18197 / FERM 7344 / JCM 9153 / C-125) (Bacillus halodurans) protein is Ribonuclease 3.